The primary structure comprises 331 residues: Ornithine carbamoyltransferase (331 aa).

Carbamoyl phosphate is bound by residues Ser-57–Thr-60, Gln-82, Arg-106, and His-133–Gln-136. L-ornithine contacts are provided by residues Asn-166, Asp-230, and Ser-234 to Met-235. Carbamoyl phosphate contacts are provided by residues Cys-272–Leu-273 and Arg-317.

This sequence belongs to the aspartate/ornithine carbamoyltransferase superfamily. OTCase family.

The protein resides in the cytoplasm. The catalysed reaction is carbamoyl phosphate + L-ornithine = L-citrulline + phosphate + H(+). It participates in amino-acid degradation; L-arginine degradation via ADI pathway; carbamoyl phosphate from L-arginine: step 2/2. Functionally, reversibly catalyzes the transfer of the carbamoyl group from carbamoyl phosphate (CP) to the N(epsilon) atom of ornithine (ORN) to produce L-citrulline. In Clostridium perfringens (strain SM101 / Type A), this protein is Ornithine carbamoyltransferase.